A 176-amino-acid polypeptide reads, in one-letter code: NAD(P)H-quinone oxidoreductase subunit 6, chloroplastic (176 aa).

5 helical membrane-spanning segments follow: residues 10–30 (ILVL…VLLT), 33–53 (IYSA…YFLL), 60–80 (VAQL…AVMF), 95–115 (IGDG…MTTI), and 152–172 (FYLP…GAIT).

The protein belongs to the complex I subunit 6 family. As to quaternary structure, NDH is composed of at least 16 different subunits, 5 of which are encoded in the nucleus.

The protein localises to the plastid. It localises to the chloroplast thylakoid membrane. The enzyme catalyses a plastoquinone + NADH + (n+1) H(+)(in) = a plastoquinol + NAD(+) + n H(+)(out). The catalysed reaction is a plastoquinone + NADPH + (n+1) H(+)(in) = a plastoquinol + NADP(+) + n H(+)(out). Its function is as follows. NDH shuttles electrons from NAD(P)H:plastoquinone, via FMN and iron-sulfur (Fe-S) centers, to quinones in the photosynthetic chain and possibly in a chloroplast respiratory chain. The immediate electron acceptor for the enzyme in this species is believed to be plastoquinone. Couples the redox reaction to proton translocation, and thus conserves the redox energy in a proton gradient. The polypeptide is NAD(P)H-quinone oxidoreductase subunit 6, chloroplastic (ndhG) (Brachypodium distachyon (Purple false brome)).